The sequence spans 395 residues: Guanine nucleotide-binding protein subunit beta-5 (395 aa).

WD repeat units lie at residues 103-142, 145-184, 193-234, 236-278, 279-318, 320-362, and 365-394; these read GHGN…KEHA, MPCT…NENM, MHTN…QSFH, HGAD…QAFE, THES…EVAI, SKES…RVSI, and GHEN…LRVW.

Belongs to the WD repeat G protein beta family. As to quaternary structure, component of a complex composed of RGS9 (isoform RGS9-1), GNB5 and RGS9BP; within this complex, the presence of GNB5 stabilizes both itself and RGS9 and increases RGS9 GTPase-activating protein (GAP) activity. Interacts with RGS7, forming the RGS7-GNB5 complex; within this complex, the presence of GNB5 increases RGS7 GTPase-activating protein (GAP) activity. Interacts with GPR158; promotes the GTPase activator activity of the RGS7-GNB5 complex in absence of glycine, in contrast GTPase activator activity of the RGS7-GNB5 complex is inhibited in presence of glycine. Interacts with RGS6. Widely expressed.

It localises to the membrane. In terms of biological role, enhances GTPase-activating protein (GAP) activity of regulator of G protein signaling (RGS) proteins, such as RGS7 and RGS9, hence involved in the termination of the signaling initiated by the G protein coupled receptors (GPCRs) by accelerating the GTP hydrolysis on the G-alpha subunits, thereby promoting their inactivation. Increases RGS7 GTPase-activating protein (GAP) activity, thereby regulating mood and cognition. Increases RGS9 GTPase-activating protein (GAP) activity, hence contributes to the deactivation of G protein signaling initiated by D(2) dopamine receptors. May play an important role in neuronal signaling, including in the parasympathetic, but not sympathetic, control of heart rate. The polypeptide is Guanine nucleotide-binding protein subunit beta-5 (GNB5) (Homo sapiens (Human)).